Here is a 319-residue protein sequence, read N- to C-terminus: Ribonuclease Z (319 aa).

Residues His-62, His-64, Asp-66, His-67, His-139, Asp-209, and His-268 each coordinate Zn(2+). The active-site Proton acceptor is the Asp-66.

The protein belongs to the RNase Z family. Homodimer. Zn(2+) is required as a cofactor.

The enzyme catalyses Endonucleolytic cleavage of RNA, removing extra 3' nucleotides from tRNA precursor, generating 3' termini of tRNAs. A 3'-hydroxy group is left at the tRNA terminus and a 5'-phosphoryl group is left at the trailer molecule.. Its function is as follows. Zinc phosphodiesterase, which displays some tRNA 3'-processing endonuclease activity. Probably involved in tRNA maturation, by removing a 3'-trailer from precursor tRNA. This chain is Ribonuclease Z, found in Pseudomonas putida (strain ATCC 47054 / DSM 6125 / CFBP 8728 / NCIMB 11950 / KT2440).